Here is a 280-residue protein sequence, read N- to C-terminus: DegV domain-containing protein spyM18_1709 (280 aa).

The region spanning 3–280 is the DegV domain; it reads WKIVTDSGCD…DGGLLMGYEI (278 aa). Hexadecanoate-binding residues include Ser-63 and Ser-91.

In terms of biological role, may bind long-chain fatty acids, such as palmitate, and may play a role in lipid transport or fatty acid metabolism. This chain is DegV domain-containing protein spyM18_1709, found in Streptococcus pyogenes serotype M18 (strain MGAS8232).